The chain runs to 195 residues: Pyridoxal 5'-phosphate synthase subunit PdxT (195 aa).

46–48 lines the L-glutamine pocket; that stretch reads GES. Cys-78 serves as the catalytic Nucleophile. Residues Arg-107 and 135–136 each bind L-glutamine; that span reads IR. Residues His-172 and Glu-174 each act as charge relay system in the active site.

This sequence belongs to the glutaminase PdxT/SNO family. As to quaternary structure, in the presence of PdxS, forms a dodecamer of heterodimers. Only shows activity in the heterodimer.

It carries out the reaction aldehydo-D-ribose 5-phosphate + D-glyceraldehyde 3-phosphate + L-glutamine = pyridoxal 5'-phosphate + L-glutamate + phosphate + 3 H2O + H(+). The catalysed reaction is L-glutamine + H2O = L-glutamate + NH4(+). It functions in the pathway cofactor biosynthesis; pyridoxal 5'-phosphate biosynthesis. Catalyzes the hydrolysis of glutamine to glutamate and ammonia as part of the biosynthesis of pyridoxal 5'-phosphate. The resulting ammonia molecule is channeled to the active site of PdxS. The polypeptide is Pyridoxal 5'-phosphate synthase subunit PdxT (Corynebacterium jeikeium (strain K411)).